Reading from the N-terminus, the 332-residue chain is Aspartate carbamoyltransferase catalytic subunit (332 aa).

Positions 54 and 55 each coordinate carbamoyl phosphate. Lys82 is a binding site for L-aspartate. Carbamoyl phosphate is bound by residues Arg104, His134, and Gln137. Arg175 and Arg230 together coordinate L-aspartate. Carbamoyl phosphate contacts are provided by Gly271 and Pro272. The disordered stretch occupies residues 312 to 332 (GGPDGDSTTSPGSGPEGGTTP).

This sequence belongs to the aspartate/ornithine carbamoyltransferase superfamily. ATCase family. Heterododecamer (2C3:3R2) of six catalytic PyrB chains organized as two trimers (C3), and six regulatory PyrI chains organized as three dimers (R2).

It carries out the reaction carbamoyl phosphate + L-aspartate = N-carbamoyl-L-aspartate + phosphate + H(+). The protein operates within pyrimidine metabolism; UMP biosynthesis via de novo pathway; (S)-dihydroorotate from bicarbonate: step 2/3. Catalyzes the condensation of carbamoyl phosphate and aspartate to form carbamoyl aspartate and inorganic phosphate, the committed step in the de novo pyrimidine nucleotide biosynthesis pathway. In Beutenbergia cavernae (strain ATCC BAA-8 / DSM 12333 / CCUG 43141 / JCM 11478 / NBRC 16432 / NCIMB 13614 / HKI 0122), this protein is Aspartate carbamoyltransferase catalytic subunit.